Consider the following 984-residue polypeptide: Putative formate dehydrogenase SAB2186c (984 aa).

The 2Fe-2S ferredoxin-type domain maps to 3-79 (EHLVVTLDGK…PMTVNTVNND (77 aa)). [2Fe-2S] cluster-binding residues include Cys37, Cys48, Cys51, and Cys63. Positions 79–119 (DVKDAQKEALDRILEKHMLYCTVCDYNNGDCEIHNTMDAWG) constitute a 4Fe-4S His(Cys)3-ligated-type domain. [4Fe-4S] cluster is bound by residues His95, Cys99, Cys102, Cys109, Cys147, Cys150, Cys153, Cys157, Cys190, Cys193, Cys196, Cys200, Cys264, Cys267, Cys271, and Cys299. 4Fe-4S ferredoxin-type domains follow at residues 138–165 (PFYR…VNET) and 181–211 (NDVP…VNME). The tract at residues 252–984 (MRKERIKKTK…YVFPGNQVDK (733 aa)) is formate dehydrogenase. The region spanning 257–313 (IKKTKTVCTYCGVGCSFEVWTKDREILKVQPSHDSPANKIATCVKGKFSWGHINSDQ) is the 4Fe-4S Mo/W bis-MGD-type domain.

In the C-terminal section; belongs to the prokaryotic molybdopterin-containing oxidoreductase family. Requires [2Fe-2S] cluster as cofactor. [4Fe-4S] cluster is required as a cofactor. The cofactor is Mo-bis(molybdopterin guanine dinucleotide).

It catalyses the reaction formate + NAD(+) = CO2 + NADH. This Staphylococcus aureus (strain bovine RF122 / ET3-1) protein is Putative formate dehydrogenase SAB2186c.